We begin with the raw amino-acid sequence, 445 residues long: 23S rRNA (uracil(1939)-C(5))-methyltransferase RlmD (445 aa).

The 59-residue stretch at S12–K70 folds into the TRAM domain. [4Fe-4S] cluster contacts are provided by C83, C89, C92, and C171. Positions 278, 307, 312, 328, 355, and 375 each coordinate S-adenosyl-L-methionine. C401 serves as the catalytic Nucleophile.

This sequence belongs to the class I-like SAM-binding methyltransferase superfamily. RNA M5U methyltransferase family. RlmD subfamily.

It carries out the reaction uridine(1939) in 23S rRNA + S-adenosyl-L-methionine = 5-methyluridine(1939) in 23S rRNA + S-adenosyl-L-homocysteine + H(+). Functionally, catalyzes the formation of 5-methyl-uridine at position 1939 (m5U1939) in 23S rRNA. This chain is 23S rRNA (uracil(1939)-C(5))-methyltransferase RlmD, found in Shewanella halifaxensis (strain HAW-EB4).